We begin with the raw amino-acid sequence, 147 residues long: MSYNFIKSNKENDFYPVNQSEIEEVEKNLNLKLPSELVNFYLEVGYGFIKGSEFNTNRILDPYSVRDFRLRINDFEFYPDIEIYDEFENDKLIFFEGSESALMSIELNDNNKNPIYYYDIQIATSLTEFLRKIEENDQYYLDLLDDE.

As to quaternary structure, probably interacts with cognate toxin YxiD but not with other non-cognate toxins. The interaction inhibits the toxic activity of YxiD.

Its subcellular location is the cytoplasm. In terms of biological role, immunity component of one of 6 LXG toxin-immunity modules in this strain. They promote kin selection, mediate competition in biofilms, and drive spatial segregation of different strains, indicating that LXG toxins may help avoid warfare between strains in biofilms. Mediates intercellular competition during biofilm formation; disruption of the operon disadvantages the bacteria, but overexpression of the cognate immunity protein restores growth in competition with wild-type. In situ neutralizes the toxic effect of cognate toxin YxiD. Neutralizes the toxic activity of cognate toxin YxiD upon expression in E.coli. Does not have immunity protein activity on other LXG toxins. In Bacillus subtilis (strain 168), this protein is Immunity protein YxxD (yxxD).